A 145-amino-acid chain; its full sequence is Synaptojanin-2-binding protein (145 aa).

The Cytoplasmic segment spans residues M1–G117. The 88-residue stretch at E13 to L100 folds into the PDZ domain. The chain crosses the membrane as a helical; Anchor for type IV membrane protein span at residues I118–F138. Residues M139–L145 are Mitochondrial intermembrane-facing.

In terms of assembly, binds (via the PDZ domain) to isoform 2A of SYNJ2 (via the unique motif in the C-terminus). Interacts (via C-terminus) with RALBP1. Interacts (via PDZ domain) with ACVR2A (via C-terminus) and ACVR2B (via C-terminus). Forms a ternary complex with ACVR2A and RALBP1. Interacts with MAPK12. Interacts with DLL1; enhances DLL1 protein stability, and promotes notch signaling in endothelial cells.

It localises to the mitochondrion outer membrane. The protein resides in the cytoplasm. The protein localises to the perinuclear region. In terms of biological role, regulates endocytosis of activin type 2 receptor kinases through the Ral/RALBP1-dependent pathway and may be involved in suppression of activin-induced signal transduction. The chain is Synaptojanin-2-binding protein from Bos taurus (Bovine).